The primary structure comprises 752 residues: Phosphatidylinositol 4-phosphate 5-kinase 1 (752 aa).

MORN repeat units lie at residues 81 to 103 (YIGSFSGGFPHGSGKYLWKDGCM), 104 to 126 (YEGDWKRGKASGKGKFSWPSGAT), 127 to 149 (YEGEFKSGRMEGFGTFTGADGDT), 150 to 172 (YRGTWVADRKHGHGQKRYANGDF), 173 to 195 (YEGTWRRNLQDGRGRYVWRNGNQ), 196 to 218 (YTGEWRSGVISGKGLLVWPNGNR), and 219 to 241 (YEGLWENGIPKGNGVFTWSDGSS). Residues 349–748 (SKGHKKYDLM…RFRDFISRIF (400 aa)) form the PIPK domain. Residues 708 to 729 (YDITKKIEHAYKSLQADPASIS) form an activation loop region.

Phosphorylation inactivates the enzyme. As to expression, expressed in the whole plant, preferentially in roots. Strongly expressed in meristematic tissues, namely procambial cell layers.

It carries out the reaction a 1,2-diacyl-sn-glycero-3-phospho-(1D-myo-inositol 4-phosphate) + ATP = a 1,2-diacyl-sn-glycero-3-phospho-(1D-myo-inositol-4,5-bisphosphate) + ADP + H(+). In terms of biological role, catalyzes the synthesis of phosphatidylinositol 4,5-bisphosphate and phosphatidylinositol 3,4-bisphosphate. The sequence is that of Phosphatidylinositol 4-phosphate 5-kinase 1 (PIP5K1) from Arabidopsis thaliana (Mouse-ear cress).